Reading from the N-terminus, the 1007-residue chain is MVDRRSFGSITPPLQLDMEQLLSEAQHRWLRPTEICEILQNYHKFHIASESPTRPASGSLFLFDRKVLRYFRKDGHNWRKKKDGKTIREAHEKLKVGSIDVLHCYYAHGEANENFQRRCYWMLEQHLMHIVFVHYLEVKGNRTSIGMKENNSNSVNGTASVNIDSTASPTSTLSSLCEDADTGDSQQASSVLRPSPEPQTGNRYGWTPAPGMRNVSQVHGNRVRESDSQRLVDVRALDTVGNSLTRFHDQPYCNNLLTQMQPSNTDSMLVEENSEKGGRLKAEHIRNPLQTQFNWQDDTDLALFEQSAQDNFETFSSLLGSENLQPFGISYQAPPSNMDSEYMPVMKILRRSEDSLKKVDSFSKWAIKELGEMEDLQMQSSRGDIAWTTVECETAAAGISLSPSLSEDQRFTIVDFWPKSAKTDAEVEVMVIGTFLLSPQEVTKYNWSCMFGEVEVPAEILVDGVLCCHAPPHTAGHVPFYVTCSNRFACSEVREFDFLSGSTQKINATDVYGTYTNEASLQLRFEKMLAHRDFVHEHHIFEDVGDKRRQISKIMLLKEEKEYLLPGTYQRDSTKQEPKGQLFRELFEEELYIWLIHKVTEEGKGPNILDEDGQGILHFVAALGYDWAIKPVLAAGVNINFRDANGWSALHWAAFSGREETVAVLVSLGADAGALTDPSPELPLGKTAADLAYANGHRGISGFLAESSLTSYLEKLTVDSKENSPANSCGEKAVQTVSERTAAPMTYGDVPEKLSLKDSLTAVRNATQAADRLHQVFRMQSFQRKQLCDIGDDEKIDISDQLAVSFAASKTKNPGQGDVSLSCAATHIQKKYRGWKKRKEFLLIRQRIVKIQAHVRGHQVRKQYRTVIWSVGLLEKIILRWRRKGNGLRGFKRNAVAKTVEPEPPVSAICPRIPQEDEYDYLKEGRKQTEERLQKALTRVKSMVQYPEARDQYRRLLTVVEGFRENEASSSASINNKEEEAVNCEEDDFIDIESLLNDDTLMMSISP.

Residues Met-18–Ser-144 constitute a DNA-binding region (CG-1). Positions Lys-148 to Asp-164 are enriched in polar residues. The tract at residues Lys-148–Asp-227 is disordered. Residues Ser-165–Leu-176 are compositionally biased toward low complexity. A compositionally biased stretch (polar residues) spans Gly-183–Asn-202. The tract at residues Asp-233–Gly-398 is transcription activation. ANK repeat units follow at residues Asp-612 to Phe-641 and Asn-645 to Ala-674. 2 consecutive IQ domains span residues Leu-821–Lys-850 and Ile-844–Leu-873. The interval Trp-869–Phe-891 is calmodulin-binding. Residues Gln-915–Met-943 adopt a coiled-coil conformation. Position 942 is a phosphoserine (Ser-942).

It belongs to the CAMTA family. In terms of tissue distribution, expressed in roots, stems, leaves, pollen and siliques.

It is found in the nucleus. In terms of biological role, transcription activator that binds calmodulin in a calcium-dependent manner in vitro. Binds to the DNA consensus sequence 5'-[ACG]CGCG[GTC]-3'. Regulates transcriptional activity in response to calcium signals. Involved in freezing tolerance. Involved in freezing tolerance in association with CAMTA2 and CAMTA3. Contributes together with CAMTA2 and CAMTA3 to the positive regulation of the cold-induced expression of DREB1A/CBF3, DREB1B/CBF1 and DREB1C/CBF2. Involved in drought stress responses by regulating several drought-responsive genes. Involved in auxin signaling and responses to abiotic stresses. Activates the expression of the V-PPase proton pump AVP1 in pollen. This chain is Calmodulin-binding transcription activator 1, found in Arabidopsis thaliana (Mouse-ear cress).